The primary structure comprises 342 residues: Succinylglutamate desuccinylase (342 aa).

His-63, Glu-66, and His-155 together coordinate Zn(2+). Glu-219 is an active-site residue.

The protein belongs to the AspA/AstE family. Succinylglutamate desuccinylase subfamily. The cofactor is Zn(2+).

It carries out the reaction N-succinyl-L-glutamate + H2O = L-glutamate + succinate. The protein operates within amino-acid degradation; L-arginine degradation via AST pathway; L-glutamate and succinate from L-arginine: step 5/5. Transforms N(2)-succinylglutamate into succinate and glutamate. The protein is Succinylglutamate desuccinylase of Vibrio vulnificus (strain YJ016).